The following is a 330-amino-acid chain: Beta-ketoacyl-[acyl-carrier-protein] synthase III (330 aa).

Catalysis depends on residues Cys114 and His257. An ACP-binding region spans residues 258–262 (QANLR). Asn287 is a catalytic residue.

This sequence belongs to the thiolase-like superfamily. FabH family. In terms of assembly, homodimer.

It localises to the cytoplasm. It carries out the reaction malonyl-[ACP] + acetyl-CoA + H(+) = 3-oxobutanoyl-[ACP] + CO2 + CoA. The protein operates within lipid metabolism; fatty acid biosynthesis. Catalyzes the condensation reaction of fatty acid synthesis by the addition to an acyl acceptor of two carbons from malonyl-ACP. Catalyzes the first condensation reaction which initiates fatty acid synthesis and may therefore play a role in governing the total rate of fatty acid production. Possesses both acetoacetyl-ACP synthase and acetyl transacylase activities. Its substrate specificity determines the biosynthesis of branched-chain and/or straight-chain of fatty acids. The sequence is that of Beta-ketoacyl-[acyl-carrier-protein] synthase III from Oleidesulfovibrio alaskensis (strain ATCC BAA-1058 / DSM 17464 / G20) (Desulfovibrio alaskensis).